Reading from the N-terminus, the 419-residue chain is MVFSAVLTAFHTGTSNTTFVVYENTYMNITLPPPFQHPDLSPLLRYSFETMAPTGLSSLTVNSTAVPTTPAAFKSLNLPLQITLSAIMIFILFVSFLGNLVVCLMVYQKAAMRSAINILLASLAFADMLLAVLNMPFALVTILTTRWIFGKFFCRVSAMFFWLFVIEGVAILLIISIDRFLIIVQRQDKLNPYRAKVLIAVSWATSFCVAFPLAVGNPDLQIPSRAPQCVFGYTTNPGYQAYVILISLISFFIPFLVILYSFMGILNTLRHNALRIHSYPEGICLSQASKLGLMSLQRPFQMSIDMGFKTRAFTTILILFAVFIVCWAPFTTYSLVATFSKHFYYQHNFFEISTWLLWLCYLKSALNPLIYYWRIKKFHDACLDMMPKSFKFLPQLPGHTKRRIRPSAVYVCGEHRTVV.

Over 1 to 81 (MVFSAVLTAF…AFKSLNLPLQ (81 aa)) the chain is Extracellular. N-linked (GlcNAc...) asparagine glycans are attached at residues Asn-16, Asn-28, and Asn-62. A helical membrane pass occupies residues 82-104 (ITLSAIMIFILFVSFLGNLVVCL). Topologically, residues 105–115 (MVYQKAAMRSA) are cytoplasmic. The chain crosses the membrane as a helical span at residues 116–138 (INILLASLAFADMLLAVLNMPFA). The Extracellular segment spans residues 139–157 (LVTILTTRWIFGKFFCRVS). The helical transmembrane segment at 158 to 177 (AMFFWLFVIEGVAILLIISI) threads the bilayer. The Cytoplasmic portion of the chain corresponds to 178 to 196 (DRFLIIVQRQDKLNPYRAK). Residues 197–216 (VLIAVSWATSFCVAFPLAVG) form a helical membrane-spanning segment. Over 217-240 (NPDLQIPSRAPQCVFGYTTNPGYQ) the chain is Extracellular. The helical transmembrane segment at 241–263 (AYVILISLISFFIPFLVILYSFM) threads the bilayer. The Cytoplasmic portion of the chain corresponds to 264 to 315 (GILNTLRHNALRIHSYPEGICLSQASKLGLMSLQRPFQMSIDMGFKTRAFTT). The helical transmembrane segment at 316–338 (ILILFAVFIVCWAPFTTYSLVAT) threads the bilayer. At 339–352 (FSKHFYYQHNFFEI) the chain is on the extracellular side. Residues 353–375 (STWLLWLCYLKSALNPLIYYWRI) traverse the membrane as a helical segment. The Cytoplasmic portion of the chain corresponds to 376–419 (KKFHDACLDMMPKSFKFLPQLPGHTKRRIRPSAVYVCGEHRTVV).

This sequence belongs to the G-protein coupled receptor 1 family. In terms of tissue distribution, expressed in brain; detected in the frontal cortex, with lower levels in the thalamus, caudate, hypothalamus and midbrain.

Its subcellular location is the cell membrane. Orphan receptor. May play a role in brain function. This Homo sapiens (Human) protein is Probable G-protein coupled receptor 63 (GPR63).